The primary structure comprises 359 residues: Protein RecA (359 aa).

69 to 76 (GPESSGKT) serves as a coordination point for ATP. The interval 337–359 (SANSVAKASEEDEEEEVDLEPEE) is disordered. The span at 346 to 359 (EEDEEEEVDLEPEE) shows a compositional bias: acidic residues.

The protein belongs to the RecA family.

The protein resides in the cytoplasm. Its function is as follows. Can catalyze the hydrolysis of ATP in the presence of single-stranded DNA, the ATP-dependent uptake of single-stranded DNA by duplex DNA, and the ATP-dependent hybridization of homologous single-stranded DNAs. It interacts with LexA causing its activation and leading to its autocatalytic cleavage. The chain is Protein RecA from Nostoc punctiforme (strain ATCC 29133 / PCC 73102).